The sequence spans 191 residues: Photosystem I assembly protein Ycf4 (191 aa).

Helical transmembrane passes span 34-54 and 68-88; these read VASMLSIGGVGFLLASFSSYF and IFVPQGLVMGLYGVAAFLLAI.

It belongs to the Ycf4 family.

The protein localises to the cellular thylakoid membrane. In terms of biological role, seems to be required for the assembly of the photosystem I complex. The protein is Photosystem I assembly protein Ycf4 of Prochlorococcus marinus (strain NATL2A).